A 471-amino-acid chain; its full sequence is UDP-N-acetylmuramate--L-alanine ligase (471 aa).

114-120 contacts ATP; the sequence is GTHGKTT.

The protein belongs to the MurCDEF family.

It is found in the cytoplasm. It catalyses the reaction UDP-N-acetyl-alpha-D-muramate + L-alanine + ATP = UDP-N-acetyl-alpha-D-muramoyl-L-alanine + ADP + phosphate + H(+). It functions in the pathway cell wall biogenesis; peptidoglycan biosynthesis. Its function is as follows. Cell wall formation. The sequence is that of UDP-N-acetylmuramate--L-alanine ligase from Chlorobaculum parvum (strain DSM 263 / NCIMB 8327) (Chlorobium vibrioforme subsp. thiosulfatophilum).